Here is a 190-residue protein sequence, read N- to C-terminus: Adenylate kinase (190 aa).

Ala-10–Thr-15 contributes to the ATP binding site. Residues Ser-30–Val-59 form an NMP region. AMP is bound by residues Thr-31, Arg-36, Glu-57–Val-59, Gly-85–Arg-88, and Gln-92. The interval Gly-126–Asp-136 is LID. Arg-127 is a binding site for ATP. 2 residues coordinate AMP: Arg-133 and Arg-144. Gly-172 lines the ATP pocket.

This sequence belongs to the adenylate kinase family. As to quaternary structure, monomer.

It is found in the cytoplasm. It carries out the reaction AMP + ATP = 2 ADP. Its pathway is purine metabolism; AMP biosynthesis via salvage pathway; AMP from ADP: step 1/1. In terms of biological role, catalyzes the reversible transfer of the terminal phosphate group between ATP and AMP. Plays an important role in cellular energy homeostasis and in adenine nucleotide metabolism. This chain is Adenylate kinase, found in Phenylobacterium zucineum (strain HLK1).